Here is a 274-residue protein sequence, read N- to C-terminus: 2,3,4,5-tetrahydropyridine-2,6-dicarboxylate N-succinyltransferase (274 aa).

The substrate site is built by R104 and D141.

It belongs to the transferase hexapeptide repeat family. In terms of assembly, homotrimer.

It is found in the cytoplasm. It carries out the reaction (S)-2,3,4,5-tetrahydrodipicolinate + succinyl-CoA + H2O = (S)-2-succinylamino-6-oxoheptanedioate + CoA. Its pathway is amino-acid biosynthesis; L-lysine biosynthesis via DAP pathway; LL-2,6-diaminopimelate from (S)-tetrahydrodipicolinate (succinylase route): step 1/3. The chain is 2,3,4,5-tetrahydropyridine-2,6-dicarboxylate N-succinyltransferase from Buchnera aphidicola subsp. Acyrthosiphon pisum (strain APS) (Acyrthosiphon pisum symbiotic bacterium).